A 248-amino-acid polypeptide reads, in one-letter code: MYITEASIDSYSSLYQISAVEVGQHFYWEIGDLRVHGQVLITSWVVIGILLTVAFLGTRKLETVPNATQNFVEYVLQFIRDLARTQIGEEEYRDWVPFVGTLFLFIFVSNWSGALVPWKLIELPHGELAAPTNDINTTVALALLTSGAYFYAGFHKRGLSYFGKYLQPTPVLLPINILEDFTKPLSLSFRLFGNILADELVVAVLVSLVPLVVPIPMMFLGLFTSGIQALIFATLAAAYIGESMEGHH.

5 helical membrane passes run glycine 37 to glycine 57, valine 96 to valine 116, isoleucine 135 to histidine 155, leucine 200 to leucine 220, and glycine 221 to glycine 241.

It belongs to the ATPase A chain family. F-type ATPases have 2 components, CF(1) - the catalytic core - and CF(0) - the membrane proton channel. CF(1) has five subunits: alpha(3), beta(3), gamma(1), delta(1), epsilon(1). CF(0) has four main subunits: a, b, b' and c.

Its subcellular location is the plastid. It localises to the chloroplast thylakoid membrane. Functionally, key component of the proton channel; it plays a direct role in the translocation of protons across the membrane. The protein is ATP synthase subunit a, chloroplastic of Staurastrum punctulatum (Green alga).